A 440-amino-acid chain; its full sequence is Lipopolysaccharide-processing protein LpsZ (440 aa).

To E.coli capsule polysaccharide export protein KpsC.

The protein localises to the cytoplasm. Its function is as follows. Involved in the invasion of nitrogen fixation nodules. May be involved in the biosynthesis of lipopolysaccharides as an enzyme or a regulatory protein. In Rhizobium meliloti (Ensifer meliloti), this protein is Lipopolysaccharide-processing protein LpsZ (lpsZ).